Consider the following 67-residue polypeptide: Conotoxin Cal14.2c (67 aa).

The first 20 residues, 1 to 20 (MNVTVMFLVLLLLTMPLTDG), serve as a signal peptide directing secretion. Positions 21–48 (FNIRATNGGELFGPVQRDAGNVLDHGFQ) are excised as a propeptide.

It belongs to the conotoxin L superfamily. Post-translationally, contains 2 disulfide bonds. Expressed by the venom duct.

Its subcellular location is the secreted. Its function is as follows. Probable neurotoxin with unknown target. Possibly targets ion channels. The protein is Conotoxin Cal14.2c of Californiconus californicus (California cone).